The following is a 155-amino-acid chain: Ribonuclease H (155 aa).

The RNase H type-1 domain maps to 9 to 150 (DGQQVEMWTD…ADALANQGME (142 aa)). Residues Asp18, Glu56, Asp78, and Asp142 each contribute to the Mg(2+) site.

Belongs to the RNase H family. In terms of assembly, monomer. Mg(2+) is required as a cofactor.

The protein localises to the cytoplasm. It catalyses the reaction Endonucleolytic cleavage to 5'-phosphomonoester.. Endonuclease that specifically degrades the RNA of RNA-DNA hybrids. This Bordetella pertussis (strain Tohama I / ATCC BAA-589 / NCTC 13251) protein is Ribonuclease H.